The chain runs to 609 residues: Glutamine--fructose-6-phosphate aminotransferase [isomerizing] (609 aa).

Cysteine 2 serves as the catalytic Nucleophile; for GATase activity. One can recognise a Glutamine amidotransferase type-2 domain in the interval 2–219 (CGIFGYLGSK…SGELAIVGLG (218 aa)). SIS domains are found at residues 280–426 (ISEK…SKHT) and 458–599 (WAHT…IDCP). Catalysis depends on lysine 604, which acts as the For Fru-6P isomerization activity.

In terms of assembly, homodimer.

It is found in the cytoplasm. The enzyme catalyses D-fructose 6-phosphate + L-glutamine = D-glucosamine 6-phosphate + L-glutamate. Its function is as follows. Catalyzes the first step in hexosamine metabolism, converting fructose-6P into glucosamine-6P using glutamine as a nitrogen source. This chain is Glutamine--fructose-6-phosphate aminotransferase [isomerizing], found in Chlamydia abortus (strain DSM 27085 / S26/3) (Chlamydophila abortus).